The following is a 461-amino-acid chain: D-phenylhydantoinase (461 aa).

3 residues coordinate a divalent metal cation: H59, H61, and K151. K151 is subject to N6-carboxylysine. Residue Y156 participates in substrate binding. A divalent metal cation-binding residues include H182 and H239. S286 contributes to the substrate binding site. D313 lines the a divalent metal cation pocket. N335 provides a ligand contact to substrate.

It belongs to the metallo-dependent hydrolases superfamily. Hydantoinase/dihydropyrimidinase family. Homotetramer. The cofactor is a divalent metal cation. Post-translationally, carboxylation allows a single lysine to coordinate two divalent metal cations.

It carries out the reaction D-5-phenylhydantoin + H2O = N-carbamoyl-D-phenylglycine + H(+). Functionally, catalyzes the stereospecific hydrolysis of the cyclic amide bond of D-hydantoin derivatives with an aromatic side chains at the 5'-position. Has no activity on dihydropyrimidines. The physiological function is unknown. This Escherichia coli O7:K1 (strain IAI39 / ExPEC) protein is D-phenylhydantoinase.